We begin with the raw amino-acid sequence, 179 residues long: Large ribosomal subunit protein bL9 (179 aa).

Residues 155–179 are disordered; the sequence is KPEEAPVPVAEEPTAETEQAEVAAE. The span at 167-179 shows a compositional bias: acidic residues; that stretch reads PTAETEQAEVAAE.

It belongs to the bacterial ribosomal protein bL9 family.

Its function is as follows. Binds to the 23S rRNA. The chain is Large ribosomal subunit protein bL9 from Porphyromonas gingivalis (strain ATCC BAA-308 / W83).